The primary structure comprises 232 residues: 2,3,4,5-tetrahydropyridine-2,6-dicarboxylate N-acetyltransferase (232 aa).

The protein belongs to the transferase hexapeptide repeat family. DapH subfamily.

The catalysed reaction is (S)-2,3,4,5-tetrahydrodipicolinate + acetyl-CoA + H2O = L-2-acetamido-6-oxoheptanedioate + CoA. The protein operates within amino-acid biosynthesis; L-lysine biosynthesis via DAP pathway; LL-2,6-diaminopimelate from (S)-tetrahydrodipicolinate (acetylase route): step 1/3. Functionally, catalyzes the transfer of an acetyl group from acetyl-CoA to tetrahydrodipicolinate. The chain is 2,3,4,5-tetrahydropyridine-2,6-dicarboxylate N-acetyltransferase from Streptococcus suis (strain 98HAH33).